The chain runs to 161 residues: Allophycocyanin alpha chain (161 aa).

The residue at position 71 (Asn71) is an N4-methylasparagine. Cys81 is a (2R,3E)-phycocyanobilin binding site.

It belongs to the phycobiliprotein family. As to quaternary structure, heterodimer of an alpha and a beta chain. Contains one covalently linked phycocyanobilin chromophore.

The protein localises to the plastid. The protein resides in the chloroplast thylakoid membrane. Light-harvesting photosynthetic bile pigment-protein from the phycobiliprotein complex. Allophycocyanin has a maximum absorption at approximately 650 nanometers. The sequence is that of Allophycocyanin alpha chain (apcA) from Pyropia haitanensis (Red seaweed).